The following is a 605-amino-acid chain: MAPDGVEDSDYESDPDELNRSLATRRREASDDDEDDEEADDHDKLRAAIQIHSDEHSGVVVVDSDDNEGLHIEDSYGDDDDEEEDGDYGQVDDHVEYIADNNDKTIVAGNGTDDSAATDLVDGEEQKKKEPFAVPTAGAFYMHDDRFQELDAASNRRMRGGRRLWQSRDERKWGHDKFEEMNTQKQQYDRRTSRGRGRGRGQGRGQDRGQSRGNNSKEFTGNGHQNQFPKAVTRGRGARRYEVALRNGNQAPSVQTKQSQNSSVEVSHVDLGRPPTETATLETEAIQAKKNVFASSLNSASPPFYPSRSNNNLAQKDVQAGMGRLHINENPNPTGKKFGNTKSSSLWGRTAQTTSHGRGVPPHGQVLYQQSPNQGDKVSSPMQIRGMPKGTDQSCTQLPGQVFNQHSAVISLLPSSPPKTGSSENPYLSGEIESAVETGALVAKGKGSLQPSGRGSFMYGGTQFMGPAGMAAGHGNPNFPAFLPVMQFGGQHGGVPTFGMALPGYFQPEHGTGNPEMTWLPILAGPGALGGSYCPPYTVLDGSYQADKPGLPSSAGSSSQENSSNNPNDEEPMERPEVTNNGNSQRSNSNPNKQPRRYSEMSFSK.

2 stretches are compositionally biased toward acidic residues: residues 1–16 (MAPD…SDPD) and 30–40 (SDDDEDDEEAD). Disordered regions lie at residues 1-88 (MAPD…DGDY), 101-132 (NNDK…KEPF), 151-275 (DAAS…GRPP), 350-380 (TAQT…KVSS), and 544-605 (YQAD…SFSK). The residue at position 30 (Ser-30) is a Phosphoserine. The segment covering 41–57 (DHDKLRAAIQIHSDEHS) has biased composition (basic and acidic residues). Positions 75 to 87 (SYGDDDDEEEDGD) are enriched in acidic residues. Positions 166–192 (QSRDERKWGHDKFEEMNTQKQQYDRRT) are enriched in basic and acidic residues. 3 stretches are compositionally biased toward polar residues: residues 214–228 (NNSK…QNQF), 247–265 (NGNQ…SSVE), and 367–380 (LYQQ…KVSS). Over residues 552-567 (PSSAGSSSQENSSNNP) the composition is skewed to low complexity. The segment covering 578–593 (VTNNGNSQRSNSNPNK) has biased composition (polar residues).

The protein belongs to the CASC3 family. As to quaternary structure, weakly interacts with EIF4A3.

The protein resides in the nucleus. Its subcellular location is the cytoplasm. Core component of the splicing-dependent multiprotein exon junction complex (EJC) deposited at splice junctions on mRNAs. The EJC is a dynamic structure consisting of core proteins and several peripheral nuclear and cytoplasmic associated factors that join the complex only transiently either during EJC assembly or during subsequent mRNA metabolism. The EJC marks the position of the exon-exon junction in the mature mRNA for the gene expression machinery and the core components remain bound to spliced mRNAs throughout all stages of mRNA metabolism thereby influencing downstream processes including nuclear mRNA export, subcellular mRNA localization, translation efficiency and nonsense-mediated mRNA decay (NMD). Stimulates the ATPase and RNA-helicase activities of EIF4A3. The sequence is that of Protein MLN51 homolog from Arabidopsis thaliana (Mouse-ear cress).